The sequence spans 260 residues: Putative sgc region transcriptional regulator (260 aa).

The region spanning 5–61 is the HTH deoR-type domain; sequence RPDRIKQMLHYLWQHRHLSTQQAMELFGYAEATVRRDFQYIVNQYPGMIRGHGCLDF. The H-T-H motif DNA-binding region spans 22 to 41; that stretch reads LSTQQAMELFGYAEATVRRD.

In terms of biological role, putative transcriptional regulator for the sgcREAQCX region. This chain is Putative sgc region transcriptional regulator (sgcR), found in Escherichia coli (strain K12).